Consider the following 204-residue polypeptide: 5'-deoxynucleotidase HDDC2 (204 aa).

A2 is subject to N-acetylalanine. Residues S3 and S5 each carry the phosphoserine modification. The HD domain maps to 46–148 (VSDHMYRMAV…VKQLDQCEMI (103 aa)). Residues H49, H77, D78, E81, D86, I87, and D143 each coordinate a divalent metal cation. S204 is modified (phosphoserine).

The protein belongs to the HDDC2 family. In terms of assembly, homodimer. It depends on Mn(2+) as a cofactor. Co(2+) is required as a cofactor. Requires Mg(2+) as cofactor.

It carries out the reaction a 2'-deoxyribonucleoside 5'-phosphate + H2O = a 2'-deoxyribonucleoside + phosphate. In terms of biological role, catalyzes the dephosphorylation of the nucleoside 5'-monophosphates deoxyadenosine monophosphate (dAMP), deoxycytidine monophosphate (dCMP), deoxyguanosine monophosphate (dGMP) and deoxythymidine monophosphate (dTMP). This chain is 5'-deoxynucleotidase HDDC2 (HDDC2), found in Homo sapiens (Human).